The primary structure comprises 458 residues: Flavohemoprotein (458 aa).

Residues 2-158 enclose the Globin domain; the sequence is PLSEDTIKAV…LAHLFVRREE (157 aa). A heme b-binding site is contributed by histidine 107. Active-site charge relay system residues include tyrosine 117 and glutamate 157. Residues 169–457 are reductase; sequence GGWRQTRSFR…FEMFGPFKPL (289 aa). The FAD-binding FR-type domain occupies 172–279; it reads RQTRSFRVEE…APPYGDFFLE (108 aa). FAD is bound by residues tyrosine 211 and 228–231; that span reads RQYS. An NADP(+)-binding site is contributed by 320-325; the sequence is GIGQTP. 450 to 453 lines the FAD pocket; that stretch reads MFGP.

Belongs to the globin family. Two-domain flavohemoproteins subfamily. This sequence in the C-terminal section; belongs to the flavoprotein pyridine nucleotide cytochrome reductase family. In terms of assembly, monomer. The cofactor is heme b. It depends on FAD as a cofactor.

The enzyme catalyses 2 nitric oxide + NADPH + 2 O2 = 2 nitrate + NADP(+) + H(+). It catalyses the reaction 2 nitric oxide + NADH + 2 O2 = 2 nitrate + NAD(+) + H(+). Flavohemoprotein involved in nitric oxide (NO) detoxification in an aerobic process, termed nitric oxide dioxygenase (NOD) reaction that utilizes O(2) and NAD(P)H to convert NO to nitrate, which protects the protozoan parasite from various noxious nitrogen compounds. Therefore, plays a central role in the inducible response to nitrosative stress. May also be involved in O(2) detoxification. In Giardia intestinalis (strain ATCC 50581 / GS clone H7) (Giardia lamblia), this protein is Flavohemoprotein (hmpA).